The primary structure comprises 470 residues: Calmodulin-binding receptor-like cytoplasmic kinase 1 (470 aa).

Disordered stretches follow at residues 1–29 (MPMR…SWTD) and 65–128 (PTEC…SKSW). The segment covering 65–82 (PTECRSDPGESSTHDRES) has biased composition (basic and acidic residues). Polar residues-rich tracts occupy residues 83–98 (TLSG…SFGR) and 108–121 (YRFS…PGKD). One can recognise a Protein kinase domain in the interval 147-423 (FSSVHQIGEG…MKGIAEKLWA (277 aa)). ATP contacts are provided by residues 153 to 161 (IGEGGFGTV) and lysine 175. The interval 162–185 (FKGKLDDGTIVAIKRARKNNYGKS) is caM-binding. Catalysis depends on aspartate 273, which acts as the Proton acceptor. Phosphoserine occurs at positions 277 and 308. Threonine 309 is modified (phosphothreonine). Residue tyrosine 322 is modified to Phosphotyrosine.

Belongs to the protein kinase superfamily. Ser/Thr protein kinase family. In terms of assembly, interacts with calmodulin (CaM) in a Ca(2+)-dependent manner. Mg(2+) is required as a cofactor. Autophosphorylated.

It is found in the cytoplasm. It catalyses the reaction L-seryl-[protein] + ATP = O-phospho-L-seryl-[protein] + ADP + H(+). The catalysed reaction is L-threonyl-[protein] + ATP = O-phospho-L-threonyl-[protein] + ADP + H(+). Up-regulated by Ca(2+)/CaM. In Arabidopsis thaliana (Mouse-ear cress), this protein is Calmodulin-binding receptor-like cytoplasmic kinase 1 (CRCK1).